The sequence spans 481 residues: Glutamyl-tRNA(Gln) amidotransferase subunit A (481 aa).

Active-site charge relay system residues include K76 and S151. S175 functions as the Acyl-ester intermediate in the catalytic mechanism.

This sequence belongs to the amidase family. GatA subfamily. As to quaternary structure, heterotrimer of A, B and C subunits.

The catalysed reaction is L-glutamyl-tRNA(Gln) + L-glutamine + ATP + H2O = L-glutaminyl-tRNA(Gln) + L-glutamate + ADP + phosphate + H(+). In terms of biological role, allows the formation of correctly charged Gln-tRNA(Gln) through the transamidation of misacylated Glu-tRNA(Gln) in organisms which lack glutaminyl-tRNA synthetase. The reaction takes place in the presence of glutamine and ATP through an activated gamma-phospho-Glu-tRNA(Gln). This chain is Glutamyl-tRNA(Gln) amidotransferase subunit A, found in Chlorobaculum parvum (strain DSM 263 / NCIMB 8327) (Chlorobium vibrioforme subsp. thiosulfatophilum).